The following is a 333-amino-acid chain: Acyl-CoA wax alcohol acyltransferase 2 (333 aa).

3 helical membrane passes run 15-35, 38-58, and 130-150; these read VFAL…VIIV, YLVV…WLAF, and TFPG…VPFL.

The protein belongs to the diacylglycerol acyltransferase family. Monomer. In terms of tissue distribution, expressed in Mueller cells of the retina (at protein level). Abundant in tissues rich in sebaceous glands such as the preputial gland and eyelid.

Its subcellular location is the endoplasmic reticulum membrane. The catalysed reaction is a long chain fatty alcohol + a fatty acyl-CoA = a wax ester + CoA. The enzyme catalyses all-trans-retinol + an acyl-CoA = an all-trans-retinyl ester + CoA. It carries out the reaction an acyl-CoA + a 1,2-diacyl-sn-glycerol = a triacyl-sn-glycerol + CoA. It catalyses the reaction 9-cis-retinol + a fatty acyl-CoA = 9-cis-retinyl ester + CoA. The catalysed reaction is 11-cis-retinol + a fatty acyl-CoA = 11-cis-retinyl ester + CoA. The enzyme catalyses 13-cis-retinol + a fatty acyl-CoA = 13-cis-retinyl ester + CoA. It carries out the reaction a 1-acylglycerol + an acyl-CoA = a 1,2-diacylglycerol + CoA. It catalyses the reaction 1-O-alkylglycerol + an acyl-CoA = 1-O-alkyl-3-acylglycerol + CoA. The catalysed reaction is a 2-acylglycerol + an acyl-CoA = a 1,2-diacyl-sn-glycerol + CoA. The enzyme catalyses 2-(9Z-octadecenoyl)-glycerol + hexadecanoyl-CoA = 1-hexadecanoyl-2-(9Z-octadecenoyl)-sn-glycerol + CoA. It carries out the reaction 1,2-di-(9Z-octadecenoyl)-sn-glycerol + hexadecanoyl-CoA = 1,2-di-(9Z)-octadecenoyl-3-hexadecanoyl-sn-glycerol + CoA. It catalyses the reaction hexadecan-1-ol + hexadecanoyl-CoA = hexadecanyl hexadecanoate + CoA. The catalysed reaction is hexadecane-1,2-diol + hexadecanoyl-CoA = 2-hydroxyhexadecyl hexadecanoate + CoA. The enzyme catalyses all-trans-retinol + hexadecanoyl-CoA = all-trans-retinyl hexadecanoate + CoA. It carries out the reaction 1,2-di-(9Z-octadecenoyl)-sn-glycerol + (9Z)-octadecenoyl-CoA = 1,2,3-tri-(9Z-octadecenoyl)-glycerol + CoA. It catalyses the reaction hexadecan-1-ol + (9Z)-octadecenoyl-CoA = hexadecanyl (9Z)-octadecenoate + CoA. The catalysed reaction is (9Z)-hexadecen-1-ol + (9Z)-octadecenoyl-CoA = 1-O-(9Z)-hexadecenyl (9Z)-octadecenoate + CoA. The enzyme catalyses octadecan-1-ol + (9Z)-octadecenoyl-CoA = 1-O-octadecyl (9Z)-octadecenoate + CoA. It carries out the reaction (9Z)-octadecen-1-ol + (9Z)-octadecenoyl-CoA = 1-O-(9Z)-octadecenyl (9Z)-octadecenoate + CoA. It catalyses the reaction hexadecan-1-ol + (9Z)-hexadecenoyl-CoA = 1-O-hexadecyl (9Z)-hexadecenoate + CoA. The catalysed reaction is hexadecan-1-ol + octadecanoyl-CoA = hexadecanyl octadecanoate + CoA. The enzyme catalyses 11-cis-retinol + hexadecanoyl-CoA = 11-cis-retinyl hexadecanoate + CoA. It carries out the reaction 1-O-(9Z-octadecenyl)-glycerol + (9Z)-octadecenoyl-CoA = 1-O-(9Z-octadecyl)-3-(9Z-octadecenoyl)-glycerol + CoA. It catalyses the reaction 1-(9Z-octadecenoyl)-glycerol + (9Z)-octadecenoyl-CoA = 1,2-di-(9Z-octadecenoyl)-glycerol + CoA. The catalysed reaction is 11-cis-retinol + tetradecanoyl-CoA = 11-cis-retinyl tetradecanoate + CoA. The enzyme catalyses 9-cis-retinol + tetradecanoyl-CoA = 9-cis-retinyl tetradecanoate + CoA. It carries out the reaction 9-cis-retinol + hexadecanoyl-CoA = 9-cis-retinyl hexadecanoate + CoA. It catalyses the reaction 13-cis-retinol + tetradecanoyl-CoA = 13-cis-retinyl tetradecanoate + CoA. The catalysed reaction is all-trans-retinol + tetradecanoyl-CoA = all-trans-retinyl tetradecanoate + CoA. The enzyme catalyses tetradecan-1-ol + tetradecanoyl-CoA = tetradecanyl tetradecanoate + CoA. Its activity is regulated as follows. 11-cis retinoids act as allosteric modulators of acyl-CoA retinol O-fatty-acyltransferase (ARAT) activity by suppressing esterification of 9-cis, 13-cis, or all-trans retinols concurrently increasing the enzyme specificity toward 11-cis isomer. Functionally, acyltransferase that catalyzes the formation of ester bonds between fatty alcohols and fatty acyl-CoAs to form wax monoesters. Shows a preference for medium chain acyl-CoAs from C12 to C16 in length and fatty alcohols shorter than C20, as the acyl donor and acceptor, respectively. Also possesses fatty acyl-CoA retinol acyltransferase (ARAT) activity that preferentially esterifies 11-cis-retinol, a chromophore precursor of bleached opsin pigments in cone cells. Shows higher catalytic efficiency toward 11-cis-retinol versus 9-cis-retinol, 13- cis-retinol and all-trans-retinol substrates. This is Acyl-CoA wax alcohol acyltransferase 2 (Awat2) from Mus musculus (Mouse).